We begin with the raw amino-acid sequence, 286 residues long: Undecaprenyl-diphosphatase (286 aa).

A run of 7 helical transmembrane segments spans residues 50-70 (PGVS…IAYF), 97-117 (LGIA…AIKL), 127-147 (LRSV…LALA), 165-185 (GLLV…RSGS), 200-220 (AARF…LVEL), 230-250 (GGVL…WLAI), and 262-282 (TWVF…WWAG).

The protein belongs to the UppP family.

Its subcellular location is the cell inner membrane. It catalyses the reaction di-trans,octa-cis-undecaprenyl diphosphate + H2O = di-trans,octa-cis-undecaprenyl phosphate + phosphate + H(+). Catalyzes the dephosphorylation of undecaprenyl diphosphate (UPP). Confers resistance to bacitracin. The sequence is that of Undecaprenyl-diphosphatase from Synechococcus sp. (strain WH7803).